Here is a 259-residue protein sequence, read N- to C-terminus: Ribosomal RNA small subunit methyltransferase J (259 aa).

S-adenosyl-L-methionine-binding positions include 101–102, 117–118, 153–154, and Asp-176; these read RD, ER, and SS.

This sequence belongs to the methyltransferase superfamily. RsmJ family.

The protein localises to the cytoplasm. It catalyses the reaction guanosine(1516) in 16S rRNA + S-adenosyl-L-methionine = N(2)-methylguanosine(1516) in 16S rRNA + S-adenosyl-L-homocysteine + H(+). Functionally, specifically methylates the guanosine in position 1516 of 16S rRNA. The sequence is that of Ribosomal RNA small subunit methyltransferase J from Aliivibrio fischeri (strain ATCC 700601 / ES114) (Vibrio fischeri).